The chain runs to 324 residues: Methenyltetrahydromethanopterin cyclohydrolase (324 aa).

It belongs to the MCH family.

The protein resides in the cytoplasm. It catalyses the reaction 5,10-methenyl-5,6,7,8-tetrahydromethanopterin + H2O = N(5)-formyl-5,6,7,8-tetrahydromethanopterin + H(+). Its pathway is one-carbon metabolism; formaldehyde degradation; formate from formaldehyde (H(4)MPT route): step 3/5. Functionally, catalyzes the hydrolysis of methenyl-H(4)MPT(+) to 5-formyl-H(4)MPT. This is Methenyltetrahydromethanopterin cyclohydrolase from Methylobacterium nodulans (strain LMG 21967 / CNCM I-2342 / ORS 2060).